The sequence spans 335 residues: MREPAFWHRPPSWQSHLLSPLSMLYGAVAARRMAQPGIKAGVPVICVGNYHVGGAGKTPTVLALTALLRGQGEQPVVLSRGYGGRLPGPVLVDPAAHGAADVGDEPLMMAAHVPVVVSRARADGVGLAKAHRASVILMDDGFQNPSITKDLALIVVDGGRGLGNARVFPAGPLRTPLPPQLARTDALMIIGRGEAGEAVASRVAAAGKPVFRAQLQPDAGVVASLAGRPLLAFAGIGDPQRFFRSLRASGLEIRAERPFPDHHPFTDGDIKALVDQATREQLALVTTEKDLVRLRGRGWDHPELAPMAFPVTLQFDDETAVRSLVARRLSAARAS.

ATP is bound at residue His51–Thr58.

This sequence belongs to the LpxK family.

The enzyme catalyses a lipid A disaccharide + ATP = a lipid IVA + ADP + H(+). It functions in the pathway glycolipid biosynthesis; lipid IV(A) biosynthesis; lipid IV(A) from (3R)-3-hydroxytetradecanoyl-[acyl-carrier-protein] and UDP-N-acetyl-alpha-D-glucosamine: step 6/6. Functionally, transfers the gamma-phosphate of ATP to the 4'-position of a tetraacyldisaccharide 1-phosphate intermediate (termed DS-1-P) to form tetraacyldisaccharide 1,4'-bis-phosphate (lipid IVA). This chain is Tetraacyldisaccharide 4'-kinase, found in Bradyrhizobium sp. (strain ORS 278).